Consider the following 284-residue polypeptide: Diaminopimelate epimerase (284 aa).

Residues Asn20, Gln53, and Asn73 each contribute to the substrate site. Cys82 serves as the catalytic Proton donor. Substrate-binding positions include 83 to 84, Asn167, Asn200, and 218 to 219; these read GN and ER. Cys227 functions as the Proton acceptor in the catalytic mechanism. 228–229 serves as a coordination point for substrate; it reads GS.

It belongs to the diaminopimelate epimerase family. Homodimer.

The protein resides in the cytoplasm. It catalyses the reaction (2S,6S)-2,6-diaminopimelate = meso-2,6-diaminopimelate. It functions in the pathway amino-acid biosynthesis; L-lysine biosynthesis via DAP pathway; DL-2,6-diaminopimelate from LL-2,6-diaminopimelate: step 1/1. In terms of biological role, catalyzes the stereoinversion of LL-2,6-diaminopimelate (L,L-DAP) to meso-diaminopimelate (meso-DAP), a precursor of L-lysine and an essential component of the bacterial peptidoglycan. The sequence is that of Diaminopimelate epimerase from Xylella fastidiosa (strain 9a5c).